The primary structure comprises 767 residues: Integrin beta-8 (767 aa).

Residues 1–21 (MCGSALAFLTAALLSLHNCQR) form the signal peptide. Over 22-681 (GPALVLGAAW…SECLSGPSYL (660 aa)) the chain is Extracellular. One can recognise a PSI domain in the interval 46–95 (RCGSANVVSCARCLQLGPECGWCVQEDFVSGGSGSERCDTVSSLISKGCP). Disulfide bonds link cysteine 47-cysteine 65, cysteine 55-cysteine 469, cysteine 58-cysteine 83, cysteine 68-cysteine 94, cysteine 211-cysteine 218, cysteine 266-cysteine 307, cysteine 407-cysteine 419, cysteine 439-cysteine 467, cysteine 471-cysteine 490, cysteine 471-cysteine 493, cysteine 481-cysteine 493, cysteine 498-cysteine 527, cysteine 510-cysteine 525, cysteine 519-cysteine 530, cysteine 532-cysteine 545, cysteine 552-cysteine 566, cysteine 560-cysteine 571, cysteine 573-cysteine 582, cysteine 584-cysteine 608, cysteine 592-cysteine 606, cysteine 600-cysteine 611, cysteine 613-cysteine 623, cysteine 626-cysteine 629, cysteine 633-cysteine 660, and cysteine 639-cysteine 656. The 239-residue stretch at 146–384 (PVDLYYLVDV…NLVVEAYKKI (239 aa)) folds into the VWFA domain. Positions 154 and 156 each coordinate Mg(2+). Aspartate 193 serves as a coordination point for Ca(2+). The N-linked (GlcNAc...) asparagine glycan is linked to asparagine 233. Residues asparagine 249, aspartate 251, proline 253, and glutamate 254 each coordinate Ca(2+). Glutamate 254 lines the Mg(2+) pocket. Residue asparagine 402 is glycosylated (N-linked (GlcNAc...) asparagine). N-linked (GlcNAc...) asparagine glycans are attached at residues asparagine 421, asparagine 431, and asparagine 456. I-EGF domains follow at residues 471–494 (CENH…PQCD), 498–546 (CHFD…QYCE), 547–583 (KDDF…DRCQ), and 584–624 (CPSA…RLCE). Asparagine 647 carries N-linked (GlcNAc...) asparagine glycosylation. Residues 682-702 (RIFFIIFIVTFLIGLLKVLII) form a helical membrane-spanning segment. Residues 703–767 (RQVILQWNNN…NAQEAFRCNF (65 aa)) are Cytoplasmic-facing.

It belongs to the integrin beta chain family. Heterodimer of an alpha and a beta subunit. Beta-8 (ITGB8) associates with alpha-V (ITGAV) to form ITGAV:ITGB8. ITGAV:ITGB8 interacts with TGFB1.

The protein resides in the cell membrane. Its function is as follows. Integrin alpha-V:beta-8 (ITGAV:ITGB8) is a receptor for fibronectin. It recognizes the sequence R-G-D in its ligands. Integrin alpha-V:beta-6 (ITGAV:ITGB6) mediates R-G-D-dependent release of transforming growth factor beta-1 (TGF-beta-1) from regulatory Latency-associated peptide (LAP), thereby playing a key role in TGF-beta-1 activation on the surface of activated regulatory T-cells (Tregs). Required during vasculogenesis. The chain is Integrin beta-8 from Mus musculus (Mouse).